A 372-amino-acid chain; its full sequence is Lipoyl synthase, mitochondrial (372 aa).

Positions 106, 111, 117, 137, 141, 144, and 352 each coordinate [4Fe-4S] cluster. In terms of domain architecture, Radical SAM core spans 122 to 341 (EYGTATATIM…EKAGNELGFL (220 aa)).

Belongs to the radical SAM superfamily. Lipoyl synthase family. Requires [4Fe-4S] cluster as cofactor.

The protein localises to the mitochondrion. The enzyme catalyses [[Fe-S] cluster scaffold protein carrying a second [4Fe-4S](2+) cluster] + N(6)-octanoyl-L-lysyl-[protein] + 2 oxidized [2Fe-2S]-[ferredoxin] + 2 S-adenosyl-L-methionine + 4 H(+) = [[Fe-S] cluster scaffold protein] + N(6)-[(R)-dihydrolipoyl]-L-lysyl-[protein] + 4 Fe(3+) + 2 hydrogen sulfide + 2 5'-deoxyadenosine + 2 L-methionine + 2 reduced [2Fe-2S]-[ferredoxin]. It functions in the pathway protein modification; protein lipoylation via endogenous pathway; protein N(6)-(lipoyl)lysine from octanoyl-[acyl-carrier-protein]: step 2/2. Catalyzes the radical-mediated insertion of two sulfur atoms into the C-6 and C-8 positions of the octanoyl moiety bound to the lipoyl domains of lipoate-dependent enzymes, thereby converting the octanoylated domains into lipoylated derivatives. The sequence is that of Lipoyl synthase, mitochondrial (lias) from Xenopus laevis (African clawed frog).